The primary structure comprises 374 residues: N5-carboxyaminoimidazole ribonucleotide synthase (374 aa).

ATP is bound by residues Arg108, Lys148, 153-159, 183-186, Glu191, His214, and 266-267; these read GYDGKGQ, EKYL, and NE. The region spanning 112–296 is the ATP-grasp domain; sequence KETLKSAGTK…QFDTHILAVT (185 aa).

The protein belongs to the PurK/PurT family. Homodimer.

The enzyme catalyses 5-amino-1-(5-phospho-beta-D-ribosyl)imidazole + hydrogencarbonate + ATP = 5-carboxyamino-1-(5-phospho-D-ribosyl)imidazole + ADP + phosphate + 2 H(+). It functions in the pathway purine metabolism; IMP biosynthesis via de novo pathway; 5-amino-1-(5-phospho-D-ribosyl)imidazole-4-carboxylate from 5-amino-1-(5-phospho-D-ribosyl)imidazole (N5-CAIR route): step 1/2. Functionally, catalyzes the ATP-dependent conversion of 5-aminoimidazole ribonucleotide (AIR) and HCO(3)(-) to N5-carboxyaminoimidazole ribonucleotide (N5-CAIR). In Staphylococcus aureus (strain MRSA252), this protein is N5-carboxyaminoimidazole ribonucleotide synthase.